A 413-amino-acid polypeptide reads, in one-letter code: Glycosyl hydrolase family 109 protein 2 (413 aa).

Residues 26–27, D48, 96–99, 116–117, and N145 each bind NAD(+); these read NR, WLTH, and EV. Y174 provides a ligand contact to substrate. NAD(+) contacts are provided by residues 191–195 and Y208; that span reads YHNHW. Residues 208 to 211 and Y290 contribute to the substrate site; that span reads YPTH.

It belongs to the Gfo/Idh/MocA family. Glycosyl hydrolase 109 subfamily. It depends on NAD(+) as a cofactor.

Functionally, glycosidase. The polypeptide is Glycosyl hydrolase family 109 protein 2 (Phocaeicola vulgatus (strain ATCC 8482 / DSM 1447 / JCM 5826 / CCUG 4940 / NBRC 14291 / NCTC 11154) (Bacteroides vulgatus)).